Here is a 128-residue protein sequence, read N- to C-terminus: Insulin-like growth factor 2 (128 aa).

Residues M1–A24 form the signal peptide. A b region spans residues A25 to F52. 3 disulfide bridges follow: C33–C71, C45–C84, and C70–C75. A c region spans residues S53 to R64. The segment at G65–A85 is a. A d region spans residues T86 to E91. Positions R92 to R128 are cleaved as a propeptide — e peptide.

The protein belongs to the insulin family. Interacts with MYORG; this interaction is required for IGF2 secretion. Interacts with integrins ITGAV:ITGB3 and ITGA6:ITGB4; integrin-binding is required for IGF2 signaling. In terms of processing, proteolytically processed by PCSK4, proIGF2 is cleaved at Arg-128 and Arg-92 to generate big-IGF2 and mature IGF2.

The protein localises to the secreted. The insulin-like growth factors possess growth-promoting activity. Major fetal growth hormone in mammals. Plays a key role in regulating fetoplacental development. IGF2 is influenced by placental lactogen. Also involved in tissue differentiation. In adults, involved in glucose metabolism in adipose tissue, skeletal muscle and liver. Acts as a ligand for integrin which is required for IGF2 signaling. Positively regulates myogenic transcription factor MYOD1 function by facilitating the recruitment of transcriptional coactivators, thereby controlling muscle terminal differentiation. Inhibits myoblast differentiation and metabolism via increasing the mitochondrial respiration rate. Functionally, preptin undergoes glucose-mediated co-secretion with insulin, and acts as a physiological amplifier of glucose-mediated insulin secretion. Exhibits osteogenic properties by increasing osteoblast mitogenic activity through phosphoactivation of MAPK1 and MAPK3. In Cavia porcellus (Guinea pig), this protein is Insulin-like growth factor 2.